We begin with the raw amino-acid sequence, 216 residues long: MLDREGFRPNVGIILLNAHNEVFWGKRLREHSWQFPQGGIKYGETPMQAMYRELHEETGLLPEHVKIIGRTRDWLRYEVPDKFIKREVRGHYRGQKQIWFLLRMVGRDCDICLRATDHPEFDAWRWNEYWVPLDAVIEFKRDVYQLALTELSRFLRRPAQRTDKSRGPRAPRYPRVSNGHAASETPAVIDASAVCSEVEPGASTLDEIPPRLILRD.

Residues 6 to 149 form the Nudix hydrolase domain; that stretch reads GFRPNVGIIL…KRDVYQLALT (144 aa). The Nudix box motif lies at 38 to 59; it reads GGIKYGETPMQAMYRELHEETG. The interval 159–180 is disordered; that stretch reads AQRTDKSRGPRAPRYPRVSNGH.

The protein belongs to the Nudix hydrolase family. RppH subfamily. The cofactor is a divalent metal cation.

In terms of biological role, accelerates the degradation of transcripts by removing pyrophosphate from the 5'-end of triphosphorylated RNA, leading to a more labile monophosphorylated state that can stimulate subsequent ribonuclease cleavage. In Burkholderia thailandensis (strain ATCC 700388 / DSM 13276 / CCUG 48851 / CIP 106301 / E264), this protein is RNA pyrophosphohydrolase.